The following is a 665-amino-acid chain: Protein Fe65 homolog (665 aa).

Over residues 1-12 the composition is skewed to basic and acidic residues; the sequence is MREGTPRVRIEV. Disordered regions lie at residues 1–43 and 90–111; these read MREG…DTAT and SRGYSSAGRGQKGRREEERRRN. The segment covering 14 to 24 has biased composition (polar residues); it reads KGSNRPSQFVS. Basic and acidic residues-rich tracts occupy residues 27 to 40 and 102 to 111; these read EEQRLQRVQSRDSD and GRREEERRRN. The region spanning 233–266 is the WW domain; sequence KDLPPGWEKHEDPQGYSYYWHVDSGTIQRQPPPP. PID domains follow at residues 330 to 456 and 499 to 615; these read VRFA…RDIC and FLGV…VLDA.

Interacts (via PID 2 domain) with apl-1 (via cytoplasmic domain). Post-translationally, phosphorylated. As to expression, expressed in the pharynx (including pharyngeal muscle and nerve cells), ventral nerve cord and tail neurons.

It is found in the cytoplasm. The protein localises to the cytoskeleton. In terms of biological role, modulates pharyngeal pumping activity, at least in part by regulating expression of the acetylcholinesterase genes ace-1 and ace-2. The polypeptide is Protein Fe65 homolog (Caenorhabditis elegans).